A 938-amino-acid chain; its full sequence is Protein O-mannosyl-transferase Tmtc2 (938 aa).

A topological domain (cytoplasmic) is located at residue M1. Residues 2-22 (PSLEPWLWGDSCSWLGMLAML) form a helical membrane-spanning segment. Over 23–34 (RLRLHKSNMDFT) the chain is Extracellular. A helical transmembrane segment spans residues 35–55 (CLFCCSLAFVLYLNTLGAGFV). The Cytoplasmic segment spans residues 56-108 (YDDRRAILANADVSGGTPWQRSFSNDFWGTPLTDSGSHGSWRPLCVLSFRLNY). A helical membrane pass occupies residues 109-129 (LIGGGFAPWGFHLVNNLLHCV). The Extracellular segment spans residues 130–139 (ATALVVRVAR). A helical membrane pass occupies residues 140–160 (TLLASVWAVLAAGALFAAHPI). The Cytoplasmic segment spans residues 161-164 (HTEA). Residues 165 to 185 (VAGVVGRADLAACVCYLLTYL) form a helical membrane-spanning segment. Residues 186-208 (SYLRHMRWRESGDPRQWLALGAT) lie on the Extracellular side of the membrane. Residues 209–229 (LILAAAGLLCKETAITALLVC) form a helical membrane-spanning segment. Residues 230 to 249 (ALFDVMRGLSGQVDKQRLRS) lie on the Cytoplasmic side of the membrane. Residues 250–270 (VCIVLGALFCMAYCRLVIVPG) traverse the membrane as a helical segment. Residues 271–291 (PQTAFSSADNPIARTPSAWTR) lie on the Extracellular side of the membrane. The helical transmembrane segment at 292-312 (LLTFLYLPVFNLRLLLQPNVL) threads the bilayer. Over 313 to 510 (SFDWGMDALP…HACVLIMSLS (198 aa)) the chain is Cytoplasmic. Residues 450 to 480 (RSSSSCSNSTNSSSSSSSSSSSSSSSSSSLS) form a disordered region. Residues 511-531 (FLALPFLPASNLLFYVGFVVA) traverse the membrane as a helical segment. The Extracellular segment spans residues 532-533 (ER). A helical membrane pass occupies residues 534-554 (LLYLPSVGFCLLVGYGVSKLM). Topologically, residues 555–562 (SCNQRTRN) are cytoplasmic. A helical membrane pass occupies residues 563–580 (ILLLSFSLLLAAMSLRTL). Over 581 to 938 (RRNADWRDEE…NLAKLGVTNV (358 aa)) the chain is Extracellular. TPR repeat units follow at residues 602 to 635 (PKAL…RPNM), 636 to 669 (ADVH…RPNL), 670 to 703 (AVAY…DGAA), 715 to 748 (SSAY…LPGL), 753 to 786 (EILY…QPNQ), 788 to 821 (AAHL…APEQ), 822 to 855 (ASVY…APND), 856 to 889 (YTLV…RPGD), and 890 to 923 (AHAH…QPGD). N-linked (GlcNAc...) asparagine glycosylation occurs at N800.

Belongs to the TMTC family.

It localises to the membrane. The protein localises to the endoplasmic reticulum. It catalyses the reaction a di-trans,poly-cis-dolichyl beta-D-mannosyl phosphate + L-seryl-[protein] = 3-O-(alpha-D-mannosyl)-L-seryl-[protein] + a di-trans,poly-cis-dolichyl phosphate + H(+). The catalysed reaction is a di-trans,poly-cis-dolichyl beta-D-mannosyl phosphate + L-threonyl-[protein] = 3-O-(alpha-D-mannosyl)-L-threonyl-[protein] + a di-trans,poly-cis-dolichyl phosphate + H(+). The protein operates within protein modification; protein glycosylation. In terms of biological role, transfers mannosyl residues to the hydroxyl group of serine or threonine residues. The sequence is that of Protein O-mannosyl-transferase Tmtc2 from Drosophila melanogaster (Fruit fly).